A 384-amino-acid chain; its full sequence is Dual-specificity RNA methyltransferase RlmN (384 aa).

The Proton acceptor role is filled by E93. The 241-residue stretch at 99–339 (EDTRGTLCVS…TTIRKTRGDD (241 aa)) folds into the Radical SAM core domain. Cysteines 106 and 344 form a disulfide. Residues C113, C117, and C120 each coordinate [4Fe-4S] cluster. Residues 170–171 (GE), S202, 224–226 (SLH), and N301 contribute to the S-adenosyl-L-methionine site. C344 serves as the catalytic S-methylcysteine intermediate.

This sequence belongs to the radical SAM superfamily. RlmN family. Requires [4Fe-4S] cluster as cofactor.

The protein localises to the cytoplasm. The enzyme catalyses adenosine(2503) in 23S rRNA + 2 reduced [2Fe-2S]-[ferredoxin] + 2 S-adenosyl-L-methionine = 2-methyladenosine(2503) in 23S rRNA + 5'-deoxyadenosine + L-methionine + 2 oxidized [2Fe-2S]-[ferredoxin] + S-adenosyl-L-homocysteine. The catalysed reaction is adenosine(37) in tRNA + 2 reduced [2Fe-2S]-[ferredoxin] + 2 S-adenosyl-L-methionine = 2-methyladenosine(37) in tRNA + 5'-deoxyadenosine + L-methionine + 2 oxidized [2Fe-2S]-[ferredoxin] + S-adenosyl-L-homocysteine. Functionally, specifically methylates position 2 of adenine 2503 in 23S rRNA and position 2 of adenine 37 in tRNAs. m2A2503 modification seems to play a crucial role in the proofreading step occurring at the peptidyl transferase center and thus would serve to optimize ribosomal fidelity. This is Dual-specificity RNA methyltransferase RlmN from Cupriavidus metallidurans (strain ATCC 43123 / DSM 2839 / NBRC 102507 / CH34) (Ralstonia metallidurans).